The chain runs to 251 residues: Small ribosomal subunit protein uS4c (251 aa).

S4 RNA-binding domains are found at residues 110-170 (MRLD…KLVN) and 189-251 (RTLA…QFSE).

Belongs to the universal ribosomal protein uS4 family. In terms of assembly, part of the 30S ribosomal subunit. Contacts protein S5. The interaction surface between S4 and S5 is involved in control of translational fidelity.

The protein resides in the plastid. Its subcellular location is the chloroplast. Its function is as follows. One of the primary rRNA binding proteins, it binds directly to 16S rRNA where it nucleates assembly of the body of the 30S subunit. With S5 and S12 plays an important role in translational accuracy. The polypeptide is Small ribosomal subunit protein uS4c (rps4) (Tetradesmus obliquus (Green alga)).